Consider the following 263-residue polypeptide: Chymotrypsinogen B (263 aa).

Residues 1 to 18 (MAFLWLVSCFALVGATFG) form the signal peptide. Disulfide bonds link cysteine 19–cysteine 140, cysteine 60–cysteine 76, cysteine 154–cysteine 219, cysteine 186–cysteine 200, and cysteine 209–cysteine 238. Positions 34–261 (IVNGEDAIPG…LMPWVQEILE (228 aa)) constitute a Peptidase S1 domain. The Charge relay system role is filled by histidine 75. At serine 93 the chain carries Phosphoserine. Aspartate 120 serves as the catalytic Charge relay system. The Charge relay system role is filled by serine 213.

The protein belongs to the peptidase S1 family.

It localises to the secreted. Its subcellular location is the extracellular space. The catalysed reaction is Preferential cleavage: Tyr-|-Xaa, Trp-|-Xaa, Phe-|-Xaa, Leu-|-Xaa.. The sequence is that of Chymotrypsinogen B (Ctrb1) from Mus musculus (Mouse).